A 97-amino-acid chain; its full sequence is Large ribosomal subunit protein uL23 (97 aa).

Belongs to the universal ribosomal protein uL23 family. As to quaternary structure, part of the 50S ribosomal subunit. Contacts protein L29, and trigger factor when it is bound to the ribosome.

One of the early assembly proteins it binds 23S rRNA. One of the proteins that surrounds the polypeptide exit tunnel on the outside of the ribosome. Forms the main docking site for trigger factor binding to the ribosome. The protein is Large ribosomal subunit protein uL23 of Rhizobium rhizogenes (strain K84 / ATCC BAA-868) (Agrobacterium radiobacter).